The following is a 122-amino-acid chain: Ribosome-binding factor A (122 aa).

It belongs to the RbfA family. As to quaternary structure, monomer. Binds 30S ribosomal subunits, but not 50S ribosomal subunits or 70S ribosomes.

The protein resides in the cytoplasm. One of several proteins that assist in the late maturation steps of the functional core of the 30S ribosomal subunit. Associates with free 30S ribosomal subunits (but not with 30S subunits that are part of 70S ribosomes or polysomes). Required for efficient processing of 16S rRNA. May interact with the 5'-terminal helix region of 16S rRNA. This is Ribosome-binding factor A from Caldanaerobacter subterraneus subsp. tengcongensis (strain DSM 15242 / JCM 11007 / NBRC 100824 / MB4) (Thermoanaerobacter tengcongensis).